The chain runs to 312 residues: Very-long-chain 3-oxoacyl-CoA reductase (312 aa).

A helical transmembrane segment spans residues 4–24 (ALPAAGFLYWVGAGTVAYLAL). NADP(+) is bound at residue 50–79 (GEWAVVTGGTDGIGKSYAEELAKRGMKVVL). 2 helical membrane-spanning segments follow: residues 182-202 (GAILNISSGSGMFPVPLLTIY) and 271-291 (GYLIHVLMGWIISNLPSWIYL). S189 provides a ligand contact to substrate. Catalysis depends on Y202, which acts as the Proton acceptor. Positions 308–312 (KIKKN) match the Di-lysine motif motif.

This sequence belongs to the short-chain dehydrogenases/reductases (SDR) family. 17-beta-HSD 3 subfamily.

It is found in the endoplasmic reticulum membrane. The catalysed reaction is a very-long-chain (3R)-3-hydroxyacyl-CoA + NADP(+) = a very-long-chain 3-oxoacyl-CoA + NADPH + H(+). It catalyses the reaction 17beta-estradiol + NAD(+) = estrone + NADH + H(+). The enzyme catalyses 17beta-estradiol + NADP(+) = estrone + NADPH + H(+). It carries out the reaction 3-oxooctadecanoyl-CoA + NADPH + H(+) = (3R)-hydroxyoctadecanoyl-CoA + NADP(+). The catalysed reaction is (7Z,10Z,13Z,16Z)-3-oxodocosatetraenoyl-CoA + NADPH + H(+) = (3R)-hydroxy-(7Z,10Z,13Z,16Z)-docosatetraenoyl-CoA + NADP(+). It catalyses the reaction 3-oxo-(7Z,10Z,13Z,16Z,19Z)-docosapentaenoyl-CoA + NADPH + H(+) = (3R)-hydroxy-(7Z,10Z,13Z,16Z,19Z)-docosapentaenoyl-CoA + NADP(+). The enzyme catalyses (8Z,11Z,14Z)-3-oxoeicosatrienoyl-CoA + NADPH + H(+) = (3R)-hydroxy-(8Z,11Z,14Z)-eicosatrienoyl-CoA + NADP(+). It functions in the pathway lipid metabolism; fatty acid biosynthesis. It participates in steroid biosynthesis; estrogen biosynthesis. Functionally, catalyzes the second of the four reactions of the long-chain fatty acids elongation cycle. This endoplasmic reticulum-bound enzymatic process, allows the addition of two carbons to the chain of long- and very long-chain fatty acids/VLCFAs per cycle. This enzyme has a 3-ketoacyl-CoA reductase activity, reducing 3-ketoacyl-CoA to 3-hydroxyacyl-CoA, within each cycle of fatty acid elongation. Thereby, it may participate in the production of VLCFAs of different chain lengths that are involved in multiple biological processes as precursors of membrane lipids and lipid mediators. May also catalyze the transformation of estrone (E1) into estradiol (E2) and play a role in estrogen formation. The polypeptide is Very-long-chain 3-oxoacyl-CoA reductase (HSD17B12) (Macaca fascicularis (Crab-eating macaque)).